The chain runs to 460 residues: DEAD-box helicase Dbp80 (460 aa).

S26 carries the phosphoserine modification. T30 is subject to Phosphothreonine. The short motif at 73–101 (KTFEALHLKASLLKGIYAMGFNTPSKIQE) is the Q motif element. The region spanning 106 to 276 (TLLADPPQNM…RLIVADPTII (171 aa)) is the Helicase ATP-binding domain. 119–126 (SQSGTGKT) is an ATP binding site. Positions 223–226 (DEAD) match the DEAD box motif. Residues 287-455 (NIKQYYVKCK…VLNTDSADDI (169 aa)) form the Helicase C-terminal domain.

This sequence belongs to the DEAD box helicase family. DDX19/DBP5 subfamily.

The protein resides in the cytoplasm. The protein localises to the nucleus. It localises to the nucleoplasm. The catalysed reaction is ATP + H2O = ADP + phosphate + H(+). Its function is as follows. ATP-dependent RNA helicase involved in mRNA export from the nucleus. This chain is DEAD-box helicase Dbp80 (Dbp80), found in Drosophila melanogaster (Fruit fly).